The chain runs to 316 residues: Putative ubiquitin-conjugating enzyme E2 39 (316 aa).

The UBC core domain maps to 57–217; that stretch reads NWVKDIQKEW…VFVFSLKTMH (161 aa). The Glycyl thioester intermediate role is filled by cysteine 143.

This sequence belongs to the ubiquitin-conjugating enzyme family.

The catalysed reaction is S-ubiquitinyl-[E1 ubiquitin-activating enzyme]-L-cysteine + [E2 ubiquitin-conjugating enzyme]-L-cysteine = [E1 ubiquitin-activating enzyme]-L-cysteine + S-ubiquitinyl-[E2 ubiquitin-conjugating enzyme]-L-cysteine.. It participates in protein modification; protein ubiquitination. In terms of biological role, accepts the ubiquitin from the E1 complex and catalyzes its covalent attachment to other proteins. This is Putative ubiquitin-conjugating enzyme E2 39 (UBC39) from Arabidopsis thaliana (Mouse-ear cress).